The primary structure comprises 500 residues: Transcription termination factor MTERF8, chloroplastic (500 aa).

A chloroplast-targeting transit peptide spans M1–R64.

This sequence belongs to the mTERF family.

It localises to the plastid. The protein localises to the chloroplast. In terms of biological role, transcription termination factor that is transcriptionally active in chloroplasts. In Arabidopsis thaliana (Mouse-ear cress), this protein is Transcription termination factor MTERF8, chloroplastic.